Consider the following 105-residue polypeptide: Large ribosomal subunit protein uL24 (105 aa).

It belongs to the universal ribosomal protein uL24 family. In terms of assembly, part of the 50S ribosomal subunit.

Its function is as follows. One of two assembly initiator proteins, it binds directly to the 5'-end of the 23S rRNA, where it nucleates assembly of the 50S subunit. One of the proteins that surrounds the polypeptide exit tunnel on the outside of the subunit. The polypeptide is Large ribosomal subunit protein uL24 (Nitrosomonas europaea (strain ATCC 19718 / CIP 103999 / KCTC 2705 / NBRC 14298)).